We begin with the raw amino-acid sequence, 310 residues long: Homoserine kinase (310 aa).

91-101 (PIGSGLGSSAC) provides a ligand contact to ATP.

Belongs to the GHMP kinase family. Homoserine kinase subfamily.

The protein resides in the cytoplasm. The catalysed reaction is L-homoserine + ATP = O-phospho-L-homoserine + ADP + H(+). Its pathway is amino-acid biosynthesis; L-threonine biosynthesis; L-threonine from L-aspartate: step 4/5. Functionally, catalyzes the ATP-dependent phosphorylation of L-homoserine to L-homoserine phosphate. This Escherichia coli O6:H1 (strain CFT073 / ATCC 700928 / UPEC) protein is Homoserine kinase.